The following is a 99-amino-acid chain: Keratinocyte differentiation-associated protein (99 aa).

Residues 1-22 (MKIPVLPAVVLLSLLALHSAQG) form the signal peptide.

In terms of tissue distribution, highly expressed in skin, but not detectable in any other tissue examined. Expression restricted to cornified/stratified epithelia and not detected in non-cornified/stratified epithelia.

It is found in the secreted. May act as a soluble regulator of keratinocyte differentiation. May play an important role in embryonic skin morphogenesis. This Canis lupus familiaris (Dog) protein is Keratinocyte differentiation-associated protein.